An 86-amino-acid polypeptide reads, in one-letter code: MVTIAAIIYEPGNSIKNKTGTWRTFRPILDNEKCVKCENCYIFCPEGAIQEDENGNFKIDYDYCKGCLICMNECPVNAITKVREEK.

4Fe-4S ferredoxin-type domains follow at residues 25–54 (FRPI…EDEN) and 55–84 (GNFK…KVRE). Residues Cys34, Cys37, Cys40, Cys44, Cys64, Cys67, Cys70, and Cys74 each contribute to the [4Fe-4S] cluster site.

Heterotetramer of one alpha, one beta, one delta and one gamma chain. It depends on [4Fe-4S] cluster as a cofactor.

The polypeptide is Pyruvate synthase subunit PorD (porD) (Methanocaldococcus jannaschii (strain ATCC 43067 / DSM 2661 / JAL-1 / JCM 10045 / NBRC 100440) (Methanococcus jannaschii)).